Consider the following 1197-residue polypeptide: Pleckstrin homology domain-containing family A member 7 (1197 aa).

WW domains follow at residues 8–41 and 53–86; these read DTLP…HPRT and SDLP…HPVT. Residues 98-148 are disordered; that stretch reads LQDQPGGRMLKQPSSTISEASTTVTTSTVDSTSGSKGSRSSGRVHSFGKRD. Residues 111–140 are compositionally biased toward low complexity; it reads SSTISEASTTVTTSTVDSTSGSKGSRSSGR. Residues 158-257 form the PH domain; it reads PVVVRGWLYK…WVRAMNQAAL (100 aa). Disordered stretches follow at residues 348–384, 423–467, and 508–577; these read PGST…NGMP, LVST…QLPS, and FRHG…TVRP. The span at 528 to 546 shows a compositional bias: low complexity; the sequence is VSSTRNNSDVSRSVSVPPT. Over residues 568–577 the composition is skewed to basic and acidic residues; that stretch reads TPAERVTVRP. A coiled-coil region spans residues 678-799; it reads DKILQELEFR…RIEDVMTGLS (122 aa). Disordered stretches follow at residues 830 to 928 and 1032 to 1064; these read SRCM…SYSN and HQRA…SDPG. The segment covering 913-924 has biased composition (basic and acidic residues); that stretch reads RQSDERKRDRES. The stretch at 1016–1044 forms a coiled coil; that stretch reads QRVRMSVEEQLERMKRHQRALVRERKRNL. Over residues 1032 to 1043 the composition is skewed to basic residues; it reads HQRALVRERKRN.

Its subcellular location is the cell junction. The protein localises to the adherens junction. The protein resides in the cytoplasm. It localises to the cytoskeleton. It is found in the microtubule organizing center. Its subcellular location is the centrosome. Its function is as follows. Required for zonula adherens biogenesis and maintenance. The polypeptide is Pleckstrin homology domain-containing family A member 7 (plekha7) (Danio rerio (Zebrafish)).